Reading from the N-terminus, the 220-residue chain is Protein US2 homolog (220 aa).

It belongs to the herpesviridae US2 family.

This is Protein US2 homolog from Bovine herpesvirus 1.2 (strain ST) (BoHV-1).